Consider the following 483-residue polypeptide: 3-isopropylmalate dehydratase large subunit (483 aa).

[4Fe-4S] cluster-binding residues include cysteine 352, cysteine 412, and cysteine 415.

This sequence belongs to the aconitase/IPM isomerase family. LeuC type 1 subfamily. In terms of assembly, heterodimer of LeuC and LeuD. [4Fe-4S] cluster serves as cofactor.

The catalysed reaction is (2R,3S)-3-isopropylmalate = (2S)-2-isopropylmalate. Its pathway is amino-acid biosynthesis; L-leucine biosynthesis; L-leucine from 3-methyl-2-oxobutanoate: step 2/4. Its function is as follows. Catalyzes the isomerization between 2-isopropylmalate and 3-isopropylmalate, via the formation of 2-isopropylmaleate. This is 3-isopropylmalate dehydratase large subunit from Paenarthrobacter aurescens (strain TC1).